We begin with the raw amino-acid sequence, 364 residues long: DNA replication and repair protein RecF (364 aa).

ATP is bound at residue 30–37 (GENAQGKT).

This sequence belongs to the RecF family.

It localises to the cytoplasm. Its function is as follows. The RecF protein is involved in DNA metabolism; it is required for DNA replication and normal SOS inducibility. RecF binds preferentially to single-stranded, linear DNA. It also seems to bind ATP. In Streptococcus suis (strain 98HAH33), this protein is DNA replication and repair protein RecF.